We begin with the raw amino-acid sequence, 319 residues long: NAP1-binding protein (319 aa).

The segment covering 34 to 43 has biased composition (basic residues); that stretch reads SALRSRRKQM. A disordered region spans residues 34 to 74; it reads SALRSRRKQMRPTGKSVLKRPRKVTDRKTEEKIRTNRRKTP. The span at 56–67 shows a compositional bias: basic and acidic residues; it reads KVTDRKTEEKIR. Phosphoserine is present on residues serine 251 and serine 260. The interval 278–319 is disordered; it reads EMQPLQENISPACPTPPYRSRETEKEDETLSPISVDFSSYLS.

In terms of assembly, interacts with NDC1 and MPS2.

The chain is NAP1-binding protein (NBP1) from Saccharomyces cerevisiae (strain ATCC 204508 / S288c) (Baker's yeast).